The following is a 1031-amino-acid chain: Beta-galactosidase (1031 aa).

Asparagine 100 and aspartate 198 together coordinate substrate. Aspartate 198 provides a ligand contact to Na(+). Mg(2+)-binding residues include glutamate 412, histidine 414, and glutamate 457. Residues glutamate 457 and 533 to 536 (EYAH) each bind substrate. Glutamate 457 acts as the Proton donor in catalysis. The Nucleophile role is filled by glutamate 533. A Mg(2+)-binding site is contributed by asparagine 593. Residues phenylalanine 597 and asparagine 600 each contribute to the Na(+) site. Residues asparagine 600 and tryptophan 1005 each coordinate substrate.

It belongs to the glycosyl hydrolase 2 family. Homotetramer. Mg(2+) serves as cofactor. It depends on Na(+) as a cofactor.

The enzyme catalyses Hydrolysis of terminal non-reducing beta-D-galactose residues in beta-D-galactosides.. This chain is Beta-galactosidase, found in Vibrio vulnificus (strain YJ016).